Reading from the N-terminus, the 682-residue chain is MDFREILLIASKGQGVNHVPKRYSLAVGPPKKDPKVKGVQSAAVQAFLRRKEEELRQKALEEKKRKEELVKKRIELKHDKKARAMAKRTKDNFHGYDGIPVEEKTKKKQLVESHLNQGTDQEYDVEEEDFIDYNQAELDQDYEEEQEPPKAESKPKAPLKSAPSPMNFTDLLRLAEKKQFEPVEIKVVKKAEDRPLTAEELREREFLERKHRKKKPEPDAKLPPPVLKKAPSHKDIMGTKPSRGAGDRQLASKGLPFPQAEKKFRPSTASEKQAALSSPKSLPGERTKVGSGSSTQPSLREGHNRPVFNGAGKPRPSTCSPSVPKTPASGTQKSASEHKAKKPLPSHPSHSKPGPTVLSHNKSKSPGVRQPGSNSGSAPGQPNPGTARPTLSSGPVPRRQNGSSSSGPEQSAGGIRKLASNSHLSGRTLNGTNGPGRPASSSSGPGRPISGSAGSGRPVGSSGGPGQPVNNPHDLRRPMNSLSSPGRAVSGPGRSISGSIPAGRTVNSGPGRPVSSLGPGRAVSNPGLPTKPRCTVVSETISSKNIISRSSNGQINGMKPLLSGYRSAQGPQRLPFPTGYKRPREYEEDDDDEYDSEMDDFIEDEGEPQEEISKHIREIFGYDRKKYKDESDYALRYMESSWKEQQKEEAKSLRLGMQEDLEEMRREEEELKRRKAKKLKRH.

An important for interaction with DNA region spans residues 1 to 569 (MDFREILLIA…PLLSGYRSAQ (569 aa)). Residue K37 forms a Glycyl lysine isopeptide (Lys-Gly) (interchain with G-Cter in SUMO2) linkage. The stretch at 46–82 (AFLRRKEEELRQKALEEKKRKEELVKKRIELKHDKKA) forms a coiled coil. A disordered region spans residues 80–170 (KKARAMAKRT…SAPSPMNFTD (91 aa)). Positions 101-111 (VEEKTKKKQLV) are enriched in basic and acidic residues. Acidic residues predominate over residues 121–131 (QEYDVEEEDFI). Low complexity predominate over residues 156–165 (KAPLKSAPSP). K186 participates in a covalent cross-link: Glycyl lysine isopeptide (Lys-Gly) (interchain with G-Cter in SUMO2). Over residues 187-208 (VVKKAEDRPLTAEELREREFLE) the composition is skewed to basic and acidic residues. Disordered regions lie at residues 187 to 533 (VVKK…TKPR) and 549 to 595 (RSSN…DEYD). 5 stretches are compositionally biased toward polar residues: residues 267–280 (STAS…SSPK), 317–334 (STCS…TQKS), 371–393 (PGSN…TLSS), 400–409 (QNGSSSSGPE), and 419–432 (ASNS…LNGT). S277 carries the post-translational modification Phosphoserine. Low complexity-rich tracts occupy residues 435 to 460 (PGRP…RPVG) and 490 to 504 (SGPG…PAGR). Residues 570–682 (GPQRLPFPTG…RRKAKKLKRH (113 aa)) form an important for interaction with histones region. An N6-acetyllysine modification is found at K581. A compositionally biased stretch (acidic residues) spans 586-595 (YEEDDDDEYD). S596 is modified (phosphoserine). 2 stretches are compositionally biased toward basic and acidic residues: residues 641–652 (SWKEQQKEEAKS) and 663–672 (EMRREEEELK). The disordered stretch occupies residues 641 to 682 (SWKEQQKEEAKSLRLGMQEDLEEMRREEEELKRRKAKKLKRH). Positions 642–682 (WKEQQKEEAKSLRLGMQEDLEEMRREEEELKRRKAKKLKRH) form a coiled coil. Positions 673-682 (RRKAKKLKRH) are enriched in basic residues.

It belongs to the SPT2 family. Interacts with histones. Interacts with a heterotetrameric complex formed by histone H3 and H4, especially when the histone tetramer is not bound to DNA. Interacts with histone H3.3.

The protein resides in the nucleus. Its subcellular location is the nucleolus. In terms of biological role, histone chaperone that stabilizes pre-existing histone tetramers and regulates replication-independent histone exchange on chromatin. Required for normal chromatin refolding in the coding region of transcribed genes, and for the suppression of spurious transcription. Binds DNA and histones and promotes nucleosome assembly (in vitro). Facilitates formation of tetrameric histone complexes containing histone H3 and H4. Modulates RNA polymerase 1-mediated transcription. Binds DNA, with a preference for branched DNA species, such as Y-form DNA and Holliday junction DNA. This is Protein SPT2 homolog (Spty2d1) from Mus musculus (Mouse).